Reading from the N-terminus, the 232-residue chain is Succinyl-CoA:3-ketoacid coenzyme A transferase subunit A (232 aa).

24-30 provides a ligand contact to CoA; that stretch reads GGFGLCG.

This sequence belongs to the 3-oxoacid CoA-transferase subunit A family. In terms of assembly, heterodimer of a subunit A and a subunit B.

The enzyme catalyses a 3-oxo acid + succinyl-CoA = a 3-oxoacyl-CoA + succinate. This Helicobacter pylori (strain J99 / ATCC 700824) (Campylobacter pylori J99) protein is Succinyl-CoA:3-ketoacid coenzyme A transferase subunit A (scoA).